The sequence spans 207 residues: Ras-related protein Rab-8B (207 aa).

The GTP site is built by Ser-17, Gly-18, Val-19, Gly-20, Lys-21, Thr-22, Cys-23, Thr-35, Ser-39, and Thr-40. Thr-22 lines the Mg(2+) pocket. Short sequence motifs (switch) lie at residues 31 to 45 (DAFNTTFISTIGIDF) and 63 to 80 (DTAGQERFRTITTAYYRG). Mg(2+) is bound by residues Thr-40 and Asp-63. Gly-66 lines the GTP pocket. Phosphothreonine; by LRRK2 is present on Thr-72. 5 residues coordinate GTP: Asn-121, Lys-122, Asp-124, Ala-152, and Lys-153. A Phosphoserine modification is found at Ser-180. Residue Cys-204 is modified to Cysteine methyl ester. Residue Cys-204 is the site of S-geranylgeranyl cysteine attachment. Positions 205–207 (SLL) are cleaved as a propeptide — removed in mature form.

Belongs to the small GTPase superfamily. Rab family. In terms of assembly, associated with actin, delta-catenin and alpha and beta tubulins. Interacts with OTOF. Interacts with PEX5R. Interacts with RAB3IP. Interacts with VIM. Interacts with CDH1. Interacts with MICALL2. Interacts with GDI1, GDI2, CHML and CHM; phosphorylation at Thr-72 disrupts these interactions. Interacts with MICAL1. Mg(2+) serves as cofactor. Phosphorylation of Thr-72 in the switch II region by LRRK2 prevents the association of RAB regulatory proteins, including CHM, CHML and RAB GDP dissociation inhibitors GDI1 and GDI2.

It is found in the cell membrane. Its subcellular location is the cytoplasmic vesicle. The protein resides in the phagosome. It localises to the phagosome membrane. The protein localises to the endosome membrane. It carries out the reaction GTP + H2O = GDP + phosphate + H(+). Its activity is regulated as follows. Regulated by guanine nucleotide exchange factors (GEFs) including RAB3IP/RABIN8 which promotes the exchange of bound GDP for free GTP. Regulated by GTPase activating proteins (GAPs) which increase the GTP hydrolysis activity. Inhibited by GDP dissociation inhibitors (GDIs). The small GTPases Rab are key regulators of intracellular membrane trafficking, from the formation of transport vesicles to their fusion with membranes. Rabs cycle between an inactive GDP-bound form and an active GTP-bound form that is able to recruit to membranes different sets of downstream effectors directly responsible for vesicle formation, movement, tethering and fusion. RAB8B may be involved in polarized vesicular trafficking and neurotransmitter release. May participate in cell junction dynamics in Sertoli cells. May also participate in the export of a subset of neosynthesized proteins through a Rab8-Rab10-Rab11-dependent endososomal export route. The protein is Ras-related protein Rab-8B of Homo sapiens (Human).